Reading from the N-terminus, the 418-residue chain is Gamma-glutamyl phosphate reductase (418 aa).

Belongs to the gamma-glutamyl phosphate reductase family.

The protein resides in the cytoplasm. It catalyses the reaction L-glutamate 5-semialdehyde + phosphate + NADP(+) = L-glutamyl 5-phosphate + NADPH + H(+). It participates in amino-acid biosynthesis; L-proline biosynthesis; L-glutamate 5-semialdehyde from L-glutamate: step 2/2. Functionally, catalyzes the NADPH-dependent reduction of L-glutamate 5-phosphate into L-glutamate 5-semialdehyde and phosphate. The product spontaneously undergoes cyclization to form 1-pyrroline-5-carboxylate. This Chlorobium chlorochromatii (strain CaD3) protein is Gamma-glutamyl phosphate reductase.